The chain runs to 228 residues: Odorant-binding protein 47 (228 aa).

6 disulfide bridges follow: cysteine 60–cysteine 225, cysteine 73–cysteine 215, cysteine 74–cysteine 204, cysteine 88–cysteine 114, cysteine 110–cysteine 185, and cysteine 158–cysteine 195. N-linked (GlcNAc...) asparagine glycosylation occurs at asparagine 117.

This sequence belongs to the PBP/GOBP family. Post-translationally, glycosylated. Head without antennae (at protein level).

The protein resides in the secreted. Present in the aqueous fluid surrounding olfactory sensory dendrites and are thought to aid in the capture and transport of hydrophobic odorants into and through this fluid. Binds N-phenyl-1-naphthylamine, menthol, citronellal, 1-dodecanol, decanal, p-tert-butylbenzophenone, 4-hydroxy-4'-isopropylazobenzene, 2-pyrrolyl-p-methyl-azobenzene and indole. Expressed in mosquito head but barely detectable in antennae, which suggests that it may be present in mouth structures, such as palpi and proboscis, and may have a function in taste. This is Odorant-binding protein 47 from Anopheles gambiae (African malaria mosquito).